Consider the following 588-residue polypeptide: Aspartate--tRNA ligase (588 aa).

An L-aspartate-binding site is contributed by glutamate 177. The interval 201 to 204 (QLFK) is aspartate. Position 223 (arginine 223) interacts with L-aspartate. ATP contacts are provided by residues 223–225 (RDE) and glutamine 232. Residue histidine 451 coordinates L-aspartate. Position 485 (glutamate 485) interacts with ATP. Arginine 492 lines the L-aspartate pocket. 537-540 (GLDR) provides a ligand contact to ATP.

It belongs to the class-II aminoacyl-tRNA synthetase family. Type 1 subfamily. In terms of assembly, homodimer.

The protein resides in the cytoplasm. It carries out the reaction tRNA(Asp) + L-aspartate + ATP = L-aspartyl-tRNA(Asp) + AMP + diphosphate. Catalyzes the attachment of L-aspartate to tRNA(Asp) in a two-step reaction: L-aspartate is first activated by ATP to form Asp-AMP and then transferred to the acceptor end of tRNA(Asp). The protein is Aspartate--tRNA ligase of Staphylococcus carnosus (strain TM300).